A 426-amino-acid polypeptide reads, in one-letter code: D-tagatose-1,6-bisphosphate aldolase subunit KbaZ (426 aa).

The protein belongs to the GatZ/KbaZ family. KbaZ subfamily. As to quaternary structure, forms a complex with KbaY.

It functions in the pathway carbohydrate metabolism; D-tagatose 6-phosphate degradation; D-glyceraldehyde 3-phosphate and glycerone phosphate from D-tagatose 6-phosphate: step 2/2. Component of the tagatose-1,6-bisphosphate aldolase KbaYZ that is required for full activity and stability of the Y subunit. Could have a chaperone-like function for the proper and stable folding of KbaY. When expressed alone, KbaZ does not show any aldolase activity. The chain is D-tagatose-1,6-bisphosphate aldolase subunit KbaZ from Escherichia coli O6:K15:H31 (strain 536 / UPEC).